The sequence spans 534 residues: H(+)/hexose cotransporter 1 (534 aa).

Topologically, residues 1–21 (MAGGGVVVVSGRGLSTGDYRG) are cytoplasmic. A helical transmembrane segment spans residues 22–42 (GLTVYVVMVAFMAACGGLLLG). Residues 43-87 (YDNGVTGGVVSLEAFEKKFFPDVWAKKQEVHEDSPYCTYDNAKLQ) lie on the Extracellular side of the membrane. A helical membrane pass occupies residues 88–108 (LFVSSLFLAGLVSCLFASWIT). The Cytoplasmic portion of the chain corresponds to 109–114 (RNWGRK). A helical membrane pass occupies residues 115 to 135 (VTMGIGGAFFVAGGLVNAFAQ). Residues 136–144 (DMAMLIVGR) are Extracellular-facing. A helical transmembrane segment spans residues 145 to 165 (VLLGFGVGLGSQVVPQYLSEV). Residues 166 to 173 (APFSHRGM) lie on the Cytoplasmic side of the membrane. The chain crosses the membrane as a helical span at residues 174 to 194 (LNIGYQLFVTIGILIAGLVNY). The Extracellular portion of the chain corresponds to 195-204 (AVRDWENGWR). Residues 205–225 (LSLGPAAAPGAILFLGSLVLP) traverse the membrane as a helical segment. Residues 226–299 (ESPNFLVEKG…TSFVIQFFQQ (74 aa)) lie on the Cytoplasmic side of the membrane. A helical membrane pass occupies residues 300–322 (FTGINAIIFYVPVLFSSLGSANS). Residues 323-328 (AALLNT) lie on the Extracellular side of the membrane. Residues 329–349 (VVVGAVNVGSTLIAVMFSDKF) traverse the membrane as a helical segment. Topologically, residues 350-352 (GRR) are cytoplasmic. The helical transmembrane segment at 353–373 (FLLIEGGIQCCLAMLTTGVVL) threads the bilayer. Over 374-387 (AIEFAKYGTDPLPK) the chain is Extracellular. Residues 388 to 408 (AVASGILAVICIFISGFAWSW) traverse the membrane as a helical segment. Residues 409 to 433 (GPMGWLIPSEIFTLETRPAGTAVAV) are Cytoplasmic-facing. Residues 434–454 (VGNFLFSFVIGQAFVSMLCAM) traverse the membrane as a helical segment. Over 455–456 (EY) the chain is Extracellular. The helical transmembrane segment at 457-477 (GVFLFFAGWLVIMVLCAIFLL) threads the bilayer. Topologically, residues 478–534 (PETKGVPIERVQALYARHWFWNRVMGPAAAEVIAEDEKRVAAASAIIKEEELSKAMK) are cytoplasmic.

Belongs to the major facilitator superfamily. Sugar transporter (TC 2.A.1.1) family.

Its subcellular location is the membrane. Functionally, active uptake of hexoses. This Parachlorella kessleri (Green alga) protein is H(+)/hexose cotransporter 1 (HUP1).